The following is a 273-amino-acid chain: MALEAMNTPTSSFTRIETKEDLMNDAVFIEPWLKRKRSKRQRSHSPSSSSSSPPRSRPKSQNQDLTEEEYLALCLLMLAKDQPSQTRFHQQSQSLTPPPESKNLPYKCNVCEKAFPSYQALGGHKASHRIKPPTVISTTADDSTAPTISIVAGEKHPIAASGKIHECSICHKVFPTGQALGGHKRCHYEGNLGGGGGGGSKSISHSGSVSSTVSEERSHRGFIDLNLPALPELSLHHNPIVDEEILSPLTGKKPLLLTDHDQVIKKEDLSLKI.

A disordered region spans residues 33–64 (LKRKRSKRQRSHSPSSSSSSPPRSRPKSQNQD). The span at 34–43 (KRKRSKRQRS) shows a compositional bias: basic residues. Residues 44 to 54 (HSPSSSSSSPP) show a composition bias toward low complexity. C2H2-type zinc fingers lie at residues 106 to 128 (YKCNVCEKAFPSYQALGGHKASH) and 165 to 187 (HECSICHKVFPTGQALGGHKRCH). The tract at residues 195-215 (GGGGGSKSISHSGSVSSTVSE) is disordered. Residues 201–213 (KSISHSGSVSSTV) are compositionally biased toward low complexity.

Expressed in roots, radicles, cotyledons, hypocotyls, leaf veins, stems, sepals, petals, stamens, placenta, funiculi and maturated seeds.

Its subcellular location is the nucleus. Transcriptional repressor involved in the inhibition of plant growth under abiotic stress conditions. Can repress the expression of various genes, including osmotic stress and abscisic acid-repressive genes and auxin-inducible genes, by binding to their promoter regions in a DNA sequence-specific manner. Acts as a negative regulator of abscisic acid (ABA) signaling during seed germination. Probably involved in jasmonate (JA) early signaling response. May regulate the expression of the JA biosynthesis gene LOX3 and control the expression of TIFY10A/JAZ1, a key repressor in the JA signaling cascade. May act as a positive regulator of leaf senescence. Has been identified as a suppressor of the deficiency of yeast snf4 mutant to grow on non-fermentable carbon source. The chain is Zinc finger protein AZF2 (AZF2) from Arabidopsis thaliana (Mouse-ear cress).